The primary structure comprises 174 residues: NADH-ubiquinone oxidoreductase chain 6 (174 aa).

6 helical membrane-spanning segments follow: residues 1-21 (MTYA…GFSS), 24-44 (SPIY…AIIL), 47-67 (GGGY…MVVF), 86-106 (VEVL…VLWV), 111-131 (GMVV…EGEG), and 151-171 (WLVV…IEIA).

Belongs to the complex I subunit 6 family. Core subunit of respiratory chain NADH dehydrogenase (Complex I) which is composed of 45 different subunits.

It is found in the mitochondrion inner membrane. The catalysed reaction is a ubiquinone + NADH + 5 H(+)(in) = a ubiquinol + NAD(+) + 4 H(+)(out). Functionally, core subunit of the mitochondrial membrane respiratory chain NADH dehydrogenase (Complex I) which catalyzes electron transfer from NADH through the respiratory chain, using ubiquinone as an electron acceptor. Essential for the catalytic activity and assembly of complex I. The protein is NADH-ubiquinone oxidoreductase chain 6 (MT-ND6) of Pan troglodytes (Chimpanzee).